We begin with the raw amino-acid sequence, 73 residues long: Arabinogalactan protein 16 (73 aa).

The first 26 residues, 1–26 (MASRNSVTGFALFSFVFAVILSLAGA), serve as a signal peptide directing secretion. Position 27 is a pyrrolidone carboxylic acid (Gln-27). Residues Pro-31, Pro-33, and Pro-35 each carry the 4-hydroxyproline modification. Pro-31, Pro-33, and Pro-35 each carry an O-linked (Ara...) hydroxyproline glycan. Ser-37 carries GPI-anchor amidated serine lipidation. A propeptide spans 38–73 (DGTSIDQGIAYLLMVVALVLTYLIHPLDASSSYSFF) (removed in mature form).

Belongs to the AG-peptide AGP family. Contains 4-hydroxyproline; hydroxylated on Pro-31, Pro-33 and Pro-35. Post-translationally, O-glycosylated on hydroxyprolines; noncontiguous hydroxylproline residues are glycosylated with arabinogalactan. In terms of tissue distribution, predominantly expressed in flowers.

It localises to the cell membrane. Proteoglycan that seems to be implicated in diverse developmental roles such as differentiation, cell-cell recognition, embryogenesis and programmed cell death. This is Arabinogalactan protein 16 from Arabidopsis thaliana (Mouse-ear cress).